The chain runs to 301 residues: MSRNIRTFRDIGNNDDGGPDSDDSGADAAERGAPQEFYAGSGQAVQGPRGAAARGPDSEAHIRRILQAAEVVQPEGGEAPRGRPSGRETISLTLHLWSDGLSIEDGPLMSRQDPRTIEFLESVGKGEIPPSLVQQYPGKEIDFKVNRHHEEYVAPKMKPFGGSGVRLGNVVPTVLGQSSSSATTAGTSSATTDHNPDHTAENEAKQLEDAKKELSTNMNEPTTNIQIRLPNNQRLVGIFNHSHTLEAVRTFICTARPDMIYAPFQMMAAYPPKPFEDESQTLKDANVLNSVVAVKILPTTN.

Positions 1–61 (MSRNIRTFRD…AARGPDSEAH (61 aa)) are disordered. The 65-residue stretch at 89–153 (TISLTLHLWS…KVNRHHEEYV (65 aa)) folds into the SEP domain. Residues 176 to 200 (GQSSSSATTAGTSSATTDHNPDHTA) are disordered. Over residues 178–192 (SSSSATTAGTSSATT) the composition is skewed to low complexity. The UBX domain maps to 218 to 295 (MNEPTTNIQI…NVLNSVVAVK (78 aa)).

This sequence belongs to the NSFL1C family. In terms of assembly, interacts with cdc-48.1 (via N-terminus) and cdc-48.2 (via N-terminus). Interacts with kinase air-1. In terms of tissue distribution, expressed in the germline (at protein level). Expressed in spermatocytes but not in mature sperm (at protein level). Ubiquitously expressed. Predominantly expressed in the spermatheca.

Its subcellular location is the cytoplasm. The protein resides in the perinuclear region. It is found in the nucleus. The protein localises to the cytoskeleton. It localises to the microtubule organizing center. Its subcellular location is the centrosome. In terms of biological role, ubiquitin-binding protein which acts as an adapter for ATPase cdc-48.1 and/or cdc-48.2, conferring substrate specificity. Together with ubxn-2 and ubxn-3, plays a role in hermaphrodite spermatogenesis probably by promoting the degradation of sex determination terminal factor tra-1. Probably in association with ATPase cdc-48.1 or/and cdc-48.2, regulates the centrosomal levels of kinase air-1 levels during mitotic progression by promoting air-1 removal from centrosomes in prophase. Also, regulates spindle orientation in the one-cell embryo by controlling centration and rotation of the pronuclei-centrosome complex in prophase. This is UBX domain-containing protein 2 from Caenorhabditis elegans.